The following is a 439-amino-acid chain: Kinesin-like protein KIN-13 (439 aa).

An ATP-binding site is contributed by 1-5 (GSGKS). The 240-residue stretch at 1–240 (GSGKSFTMMH…LRYADRVKEL (240 aa)) folds into the Kinesin motor domain.

Belongs to the TRAFAC class myosin-kinesin ATPase superfamily. Kinesin family. KIN-13 subfamily. As to quaternary structure, interacts with PLK. Post-translationally, phosphorylated by PLK.

It is found in the cytoplasm. The protein resides in the cytoskeleton. It localises to the cell projection. The protein localises to the cilium. Its subcellular location is the flagellum. It is found in the flagellum basal body. The protein resides in the flagellum axoneme. It localises to the spindle. The protein localises to the chromosome. Its subcellular location is the centromere. It is found in the kinetochore. In terms of biological role, involved in cell cycle. Involved in formation of flagella, regulation of flagellar length, and formation of median bodies during interphase. Regulates flagellar length in all eight distal flagellar tips by promoting disassembly of the microtubules. Disassembles microtubules at the distal flagellar tips in a length-dependent manner in order to maintain different equilibrium lengths of the four flagellar pairs. Regulates interphase and mitotic microtubule dynamics. Regulates microtubule disassembly dynamics of the dual mitotic spindles and the median body. This is Kinesin-like protein KIN-13 from Giardia intestinalis (Giardia lamblia).